A 110-amino-acid chain; its full sequence is Cell cycle protein GpsB (110 aa).

Positions 32–73 (LDDVIKDYENYLEQIEKLQMENRRLQQALDKKESEASNVRNS) form a coiled coil.

This sequence belongs to the GpsB family. As to quaternary structure, forms polymers through the coiled coil domains. Interacts with PBP1, MreC and EzrA.

It is found in the cytoplasm. In terms of biological role, divisome component that associates with the complex late in its assembly, after the Z-ring is formed, and is dependent on DivIC and PBP2B for its recruitment to the divisome. Together with EzrA, is a key component of the system that regulates PBP1 localization during cell cycle progression. Its main role could be the removal of PBP1 from the cell pole after pole maturation is completed. Also contributes to the recruitment of PBP1 to the division complex. Not essential for septum formation. The chain is Cell cycle protein GpsB from Streptococcus agalactiae serotype Ia (strain ATCC 27591 / A909 / CDC SS700).